Reading from the N-terminus, the 1149-residue chain is MSRYMQRPENALKRANEFIEVGKPARALDTLQEVFRIKKWTYTWSEAVIEPIMFKYLDLCVELKKSHIAKEGLFQYRNMFQMLNVGSLENVIRGYLKMAEERTEAAQQQSSQAILDIDDLDNLATPESILMSAVCGEDAQDRSDRTILLPWVKFLWESYGQCLELLKVNSHCENLYHDIAKMAFAFCLKYNRKMEFRKLCEKLRKHLDDISKVSSQTANVSISKPETQQLNLDTRLNQLDCAIQMELWLEAYKAIEDIHGLMTLSKKTPMPKTMALYYQKLAMVFWKAGNQLFHAAALLKLFQLSRDMKKNVTQEEIQRMTSHVLIATLAIPLPSAHPEFDRFIETDKSPLEKAQKLAVLLGLQQPPSRVSLLKEVLRLNVLQLAAPQFQNLYKWLEVEFDPLNLCSRVQGVIEEITADENSPYTQYTQALQDVTLVRLVRQVSQVYQSIEFSRFLSLAKFANSFYLERILVDCVRHNDMQITIDHRNHSVHFGTDLSESQREDHPDGPTLQSMPSEQVRSQLVNMSVVLHRAIATINPNRKKADRERLRNQMVKNYEENMVKDHQRILQRQKKIEDRKEYIERVNLEREELEQRQLEEAARQQKLAEMRRLEQENEERERKRHENEIQMIKERNMKDKIDQIKQSASGQKLLKKIDEEDIKKMNAEEIAAKEAEERQKERKAHDNNLKSQEKKIDYFERAKRLEEIPLIEKYLEDKLVQDKEFWEKQEASRIEAAIAERKNAEQVQERLRRMQADRDVFWQKLKGERSNAFAEKLKVFNAALEEERRRRLAERVIQRREERRQKWLREKEEERRRIEEELRKQREEEERIERERRAEERRIENEKQRVIMEKQRAKEEEIERKLAEEKERLKERAPRGEKEERGGGGGGGGAWRGRGDTAAPAESAAKPESDWRNAREAREPAPESAGASSAAAPAPKKDGVWQPSGRFREGRGAPGADRPPRGDDREPPAAAAGESKWRRGGGGADDDKDDGPRPRVGAGDRGPMRRGDGDRDDRGPMRRGDRPPMRDGDRPGMRRDDRGDRREGGAPDRRDFGGRGGDRRDDRRDDRGPRREGGGERGGDVWRRAPQEDRRGGAAGGESGGNWRNARQAEPAKPREERRGGEERPKEARAAAGPDEDGWTDVKHHR.

The PCI domain occupies 317–498 (IQRMTSHVLI…HSVHFGTDLS (182 aa)). Disordered stretches follow at residues 496–515 (DLSE…QSMP) and 811–1149 (EEER…KHHR). Positions 811–885 (EEERRRIEEE…APRGEKEERG (75 aa)) are enriched in basic and acidic residues. A compositionally biased stretch (gly residues) spans 886–895 (GGGGGGGAWR). Basic and acidic residues predominate over residues 908-924 (AKPESDWRNAREAREPA). The span at 925 to 937 (PESAGASSAAAPA) shows a compositional bias: low complexity. Basic and acidic residues-rich tracts occupy residues 961-970 (RPPRGDDREP), 1005-1095 (GPMR…DRRG), and 1113-1132 (EPAK…KEAR).

The protein belongs to the eIF-3 subunit A family. Component of the eukaryotic translation initiation factor 3 (eIF-3) complex.

It localises to the cytoplasm. In terms of biological role, RNA-binding component of the eukaryotic translation initiation factor 3 (eIF-3) complex, which is involved in protein synthesis of a specialized repertoire of mRNAs and, together with other initiation factors, stimulates binding of mRNA and methionyl-tRNAi to the 40S ribosome. The eIF-3 complex specifically targets and initiates translation of a subset of mRNAs involved in cell proliferation. The sequence is that of Eukaryotic translation initiation factor 3 subunit A from Culex quinquefasciatus (Southern house mosquito).